Here is a 423-residue protein sequence, read N- to C-terminus: tRNA(Ile)-lysidine synthase (423 aa).

ATP is bound at residue 27 to 32; it reads SGGVDS.

This sequence belongs to the tRNA(Ile)-lysidine synthase family.

The protein localises to the cytoplasm. The catalysed reaction is cytidine(34) in tRNA(Ile2) + L-lysine + ATP = lysidine(34) in tRNA(Ile2) + AMP + diphosphate + H(+). Functionally, ligates lysine onto the cytidine present at position 34 of the AUA codon-specific tRNA(Ile) that contains the anticodon CAU, in an ATP-dependent manner. Cytidine is converted to lysidine, thus changing the amino acid specificity of the tRNA from methionine to isoleucine. This Streptococcus mutans serotype c (strain ATCC 700610 / UA159) protein is tRNA(Ile)-lysidine synthase.